The sequence spans 109 residues: U26-theraphotoxin-Cg1b (109 aa).

The N-terminal stretch at M1 to A18 is a signal peptide. A propeptide spanning residues Y19 to R67 is cleaved from the precursor. 3 disulfide bridges follow: C68-C83, C75-C88, and C82-C103.

Belongs to the neurotoxin 14 (magi-1) family. 07 (Jztx-56) subfamily. As to expression, expressed by the venom gland.

It is found in the secreted. Functionally, probable ion channel inhibitor. This chain is U26-theraphotoxin-Cg1b, found in Chilobrachys guangxiensis (Chinese earth tiger tarantula).